The primary structure comprises 341 residues: Glycerol-3-phosphate dehydrogenase [NAD(P)+] 1 (341 aa).

Residues Ser-11, Trp-12, Arg-32, Arg-33, and Lys-106 each coordinate NADPH. Residues Lys-106, Gly-137, and Ser-139 each contribute to the sn-glycerol 3-phosphate site. Ala-141 provides a ligand contact to NADPH. Residues Lys-192, Asp-245, Ser-255, Arg-256, and Asn-257 each contribute to the sn-glycerol 3-phosphate site. Residue Lys-192 is the Proton acceptor of the active site. Arg-256 serves as a coordination point for NADPH. 2 residues coordinate NADPH: Val-280 and Glu-282.

Belongs to the NAD-dependent glycerol-3-phosphate dehydrogenase family.

The protein localises to the cytoplasm. The catalysed reaction is sn-glycerol 3-phosphate + NAD(+) = dihydroxyacetone phosphate + NADH + H(+). The enzyme catalyses sn-glycerol 3-phosphate + NADP(+) = dihydroxyacetone phosphate + NADPH + H(+). It participates in membrane lipid metabolism; glycerophospholipid metabolism. In terms of biological role, catalyzes the reduction of the glycolytic intermediate dihydroxyacetone phosphate (DHAP) to sn-glycerol 3-phosphate (G3P), the key precursor for phospholipid synthesis. The chain is Glycerol-3-phosphate dehydrogenase [NAD(P)+] 1 from Salinibacter ruber (strain DSM 13855 / M31).